We begin with the raw amino-acid sequence, 172 residues long: 3-hydroxydecanoyl-[acyl-carrier-protein] dehydratase (172 aa).

H71 is an active-site residue.

The protein belongs to the thioester dehydratase family. FabA subfamily. As to quaternary structure, homodimer.

It is found in the cytoplasm. The enzyme catalyses a (3R)-hydroxyacyl-[ACP] = a (2E)-enoyl-[ACP] + H2O. The catalysed reaction is (3R)-hydroxydecanoyl-[ACP] = (2E)-decenoyl-[ACP] + H2O. It carries out the reaction (2E)-decenoyl-[ACP] = (3Z)-decenoyl-[ACP]. Its pathway is lipid metabolism; fatty acid biosynthesis. In terms of biological role, necessary for the introduction of cis unsaturation into fatty acids. Catalyzes the dehydration of (3R)-3-hydroxydecanoyl-ACP to E-(2)-decenoyl-ACP and then its isomerization to Z-(3)-decenoyl-ACP. Can catalyze the dehydratase reaction for beta-hydroxyacyl-ACPs with saturated chain lengths up to 16:0, being most active on intermediate chain length. This Yersinia pseudotuberculosis serotype O:1b (strain IP 31758) protein is 3-hydroxydecanoyl-[acyl-carrier-protein] dehydratase.